Consider the following 250-residue polypeptide: Proteasome subunit alpha type-4 (250 aa).

Belongs to the peptidase T1A family. As to quaternary structure, the 26S proteasome consists of a 20S proteasome core and two 19S regulatory subunits. The 20S proteasome core is composed of 28 subunits that are arranged in four stacked rings, resulting in a barrel-shaped structure. The two end rings are each formed by seven alpha subunits, and the two central rings are each formed by seven beta subunits. The catalytic chamber with the active sites is on the inside of the barrel.

It localises to the cytoplasm. The protein resides in the nucleus. The proteasome is a multicatalytic proteinase complex which is characterized by its ability to cleave peptides with Arg, Phe, Tyr, Leu, and Glu adjacent to the leaving group at neutral or slightly basic pH. The proteasome has an ATP-dependent proteolytic activity. This chain is Proteasome subunit alpha type-4 (PAC1), found in Spinacia oleracea (Spinach).